The sequence spans 613 residues: Ribosome-associated molecular chaperone SSB1 (613 aa).

The segment at 1 to 391 (MAEGVFPGAI…ILTGQSTSDE (391 aa)) is nucleotide binding domain (NBD). ATP-binding positions include 16 to 18 (TTY), Lys73, 205 to 207 (GGT), 271 to 278 (ERAKRTLS), and Gly342. An inter-domain linker region spans residues 392-402 (TKDLLLLDVAP). Positions 403–613 (LSLGVGMAGD…RAVTKAMSTR (211 aa)) are substrate binding domain (SBD). Positions 516 to 612 (SEEIEQMVNQ…KRAVTKAMST (97 aa)) are lid domain (SBDalpha). The short motif at 574-582 (VEAALADAF) is the Nuclear export signal element.

It belongs to the heat shock protein 70 family. Ssb-type Hsp70 subfamily. As to quaternary structure, binds to ribosomes. Binds close to the ribosomal tunnel exit via contacts with both ribosomal proteins and rRNA. Directly interacts with nascent polypeptides. This interaction is dependent on the ribosome-associated complex (RAC). Interacts with SSE1. Interacts with FES1.

Its subcellular location is the cytoplasm. The catalysed reaction is ATP + H2O = ADP + phosphate + H(+). Functionally, ribosome-bound, Hsp70-type chaperone that assists in the cotranslational folding of newly synthesized proteins in the cytosol. Stimulates folding by interacting with nascent chains, binding to short, largely hydrophobic sequences exposed by unfolded proteins, thereby stabilizing longer, more slowly translated, and aggregation-prone nascent polypeptides and domains that cannot fold stably until fully synthesized. The Hsp70-protein substrate interaction depends on ATP-binding and on allosteric regulation between the NBD and the SBD. The ATP-bound state is characterized by a fast exchange rate of substrate (low affinity state), while in the ADP-bound state exchange is much slower (high affinity state). During the Hsp70 cycle, the chaperone switches between the ATP-bound state (open conformation) and the ADP-bound state (closed conformation) by major conformational rearrangements involving mainly the lid domain. Ssb cooperates with a specific Hsp40/Hsp70 co-chaperone termed the ribosome-associated complex (RAC), which stimulates the ATPase activity of the ribosome-associated pool of Ssbs and switches it to the high affinity substrate binding state. Hsp110 chaperone SSE1 and FES1 act as nucleotide exchange factors that cause substrate release. In Kluyveromyces marxianus (Yeast), this protein is Ribosome-associated molecular chaperone SSB1 (SSB1).